The following is a 150-amino-acid chain: Deoxyuridine 5'-triphosphate nucleotidohydrolase (150 aa).

Substrate is bound by residues 69–71 (RSG), Asn-82, 86–88 (LID), and Lys-96.

This sequence belongs to the dUTPase family. It depends on Mg(2+) as a cofactor.

It carries out the reaction dUTP + H2O = dUMP + diphosphate + H(+). The protein operates within pyrimidine metabolism; dUMP biosynthesis; dUMP from dCTP (dUTP route): step 2/2. Functionally, this enzyme is involved in nucleotide metabolism: it produces dUMP, the immediate precursor of thymidine nucleotides and it decreases the intracellular concentration of dUTP so that uracil cannot be incorporated into DNA. This is Deoxyuridine 5'-triphosphate nucleotidohydrolase from Neisseria gonorrhoeae (strain ATCC 700825 / FA 1090).